We begin with the raw amino-acid sequence, 110 residues long: Insulin (110 aa).

The first 24 residues, methionine 1 to alanine 24, serve as a signal peptide directing secretion. 3 disulfides stabilise this stretch: cysteine 31–cysteine 96, cysteine 43–cysteine 109, and cysteine 95–cysteine 100. Residues glutamate 57–glutamine 87 constitute a propeptide, c peptide.

It belongs to the insulin family. As to quaternary structure, heterodimer of a B chain and an A chain linked by two disulfide bonds.

The protein resides in the secreted. Insulin decreases blood glucose concentration. It increases cell permeability to monosaccharides, amino acids and fatty acids. It accelerates glycolysis, the pentose phosphate cycle, and glycogen synthesis in liver. The chain is Insulin (INS) from Chlorocebus aethiops (Green monkey).